The primary structure comprises 315 residues: Methionyl-tRNA formyltransferase (315 aa).

110 to 113 (SLLP) contributes to the (6S)-5,6,7,8-tetrahydrofolate binding site.

It belongs to the Fmt family.

It carries out the reaction L-methionyl-tRNA(fMet) + (6R)-10-formyltetrahydrofolate = N-formyl-L-methionyl-tRNA(fMet) + (6S)-5,6,7,8-tetrahydrofolate + H(+). Attaches a formyl group to the free amino group of methionyl-tRNA(fMet). The formyl group appears to play a dual role in the initiator identity of N-formylmethionyl-tRNA by promoting its recognition by IF2 and preventing the misappropriation of this tRNA by the elongation apparatus. This Cutibacterium acnes (strain DSM 16379 / KPA171202) (Propionibacterium acnes) protein is Methionyl-tRNA formyltransferase.